Consider the following 479-residue polypeptide: MASTIKEALSVVSEDQSLFECAYGTPHLAKTEMTASSSSDYGQTSKMSPRVPQQDWLSQPPARVTIKMECNPSQVNGSRNSPDECSVAKGGKMVGSPDTVGMNYGSYMEEKHMPPPNMTTNERRVIVPADPTLWSTDHVRQWLEWAVKEYGLPDVNILLFQNIDGKELCKMTKDDFQRLTPSYNADILLSHLHYLRETPLPHLTSDDVDKALQNSPRLMHARNTGGAAFIFPNTSVYPEATQRITTRPDLPYEPPRRSAWTGHGHPTPQSKAAQPSPSTVPKTEDQRPQLDPYQILGPTSSRLANPGSGQIQLWQFLLELLSDSSNSSCITWEGTNGEFKMTDPDEVARRWGERKSKPNMNYDKLSRALRYYYDKNIMTKVHGKRYAYKFDFHGIAQALQPHPPESSLYKYPSDLPYMGSYHAHPQKMNFVAPHPPALPVTSSSFFAAPNPYWNSPTGGIYPNTRLPTSHMPSHLGTYY.

The span at 34–47 (TASSSSDYGQTSKM) shows a compositional bias: polar residues. 2 disordered regions span residues 34–56 (TASS…QQDW) and 72–92 (PSQV…KGGK). 3 positions are modified to phosphoserine: Ser48, Ser81, and Ser96. One can recognise a PNT domain in the interval 113 to 199 (MPPPNMTTNE…SHLHYLRETP (87 aa)). The tract at residues 242 to 293 (QRITTRPDLPYEPPRRSAWTGHGHPTPQSKAAQPSPSTVPKTEDQRPQLDPY) is disordered. The span at 267–281 (TPQSKAAQPSPSTVP) shows a compositional bias: polar residues. Residue Lys282 forms a Glycyl lysine isopeptide (Lys-Gly) (interchain with G-Cter in SUMO2) linkage. The ETS DNA-binding region spans 311–391 (IQLWQFLLEL…HGKRYAYKFD (81 aa)).

This sequence belongs to the ETS family. Identified in a IGF2BP1-dependent mRNP granule complex containing untranslated mRNAs. Interacts with SETDB1.

It is found in the nucleus. It localises to the cytoplasm. Functionally, transcriptional regulator. May participate in transcriptional regulation through the recruitment of SETDB1 histone methyltransferase and subsequent modification of local chromatin structure. In Homo sapiens (Human), this protein is Transcriptional regulator ERG (ERG).